Here is a 348-residue protein sequence, read N- to C-terminus: Pyruvate dehydrogenase E1 component subunit alpha (348 aa).

The segment at 1–21 (MAPRKSASVSSRKTAAKPAKK) is disordered.

Heterodimer of an alpha and a beta chain. Requires thiamine diphosphate as cofactor.

The enzyme catalyses N(6)-[(R)-lipoyl]-L-lysyl-[protein] + pyruvate + H(+) = N(6)-[(R)-S(8)-acetyldihydrolipoyl]-L-lysyl-[protein] + CO2. In terms of biological role, the pyruvate dehydrogenase complex catalyzes the overall conversion of pyruvate to acetyl-CoA and CO(2). It contains multiple copies of three enzymatic components: pyruvate dehydrogenase (E1), dihydrolipoamide acetyltransferase (E2) and lipoamide dehydrogenase (E3). In Rhizobium meliloti (strain 1021) (Ensifer meliloti), this protein is Pyruvate dehydrogenase E1 component subunit alpha (pdhA).